A 540-amino-acid chain; its full sequence is MHFSLPTSRIVVVVPAAAICIVCVLIETCTAARSHVYTIPLRKGKETSFAETVGEPVRTNQVNVSVEEQKNNIRGRPGLGYYIEVDIGTPPQKLNVLIDTGSSNFAVAASSHNAISTYYRRNESSTYEDQGTYVKVPYTQGEWSGDLGQDLVQIASLGNQSFQANIAAITESKMFFLNDSRWQGILGLGYAEIARPDSSVEPFFDSLTSQTSIQDIFALQMCGALASTNDTNLGSSADGPVEEVIGSMNIGGLDASLYHGTMQYAPLRDEWFYEVIMTDIRVGNDSLGLDCKEYNFDKTIVDSGTTNLRLPVRVFEAITNAIKAHTTKHMPDVPSEFWTGMNLMCPTDSTSPYEPYHWFPTLTLDLQSTNQGQAFSLVVSPQQYLRRDYDHEDKKNCFKFAIAPSTNHAGAVIGAVIMEGFYVVFDRENKRVGFARSTCPGACEKTGTCVGNSPLITEAFNIDFDASDCGYDRSTSYDPALTITAYVLAAICLVCLIPVIVFALTHQINKRCKGRRGRGVVNHHRLDQEGLAENEPNSDP.

Residues 1–31 (MHFSLPTSRIVVVVPAAAICIVCVLIETCTA) form the signal peptide. One can recognise a Peptidase A1 domain in the interval 81 to 435 (YYIEVDIGTP…DRENKRVGFA (355 aa)). Active-site residues include aspartate 99 and aspartate 302. 3 disulfides stabilise this stretch: cysteine 222–cysteine 439, cysteine 291–cysteine 469, and cysteine 345–cysteine 397. A helical membrane pass occupies residues 483–503 (ITAYVLAAICLVCLIPVIVFA). Topologically, residues 504–540 (LTHQINKRCKGRRGRGVVNHHRLDQEGLAENEPNSDP) are cytoplasmic.

Belongs to the peptidase A1 family.

It localises to the membrane. The sequence is that of Beta-secretase from Strongylocentrotus purpuratus (Purple sea urchin).